The chain runs to 130 residues: Protein ApaG (130 aa).

In terms of domain architecture, ApaG spans 3 to 127; sequence EHESCGVRIS…FSLDRPSDRL (125 aa).

The protein is Protein ApaG of Maricaulis maris (strain MCS10) (Caulobacter maris).